The chain runs to 72 residues: Toxin Cll8 (72 aa).

A signal peptide spans 1–4; the sequence is TVSA. The LCN-type CS-alpha/beta domain maps to 5-70; sequence KEGYLVKKSN…TWPLPNKSCG (66 aa). Disulfide bonds link C16-C69, C20-C45, C29-C50, and C33-C52. Residue C69 is modified to Cysteine amide.

Belongs to the long (4 C-C) scorpion toxin superfamily. Sodium channel inhibitor family. Beta subfamily. Expressed by the venom gland.

Its subcellular location is the secreted. Functionally, beta toxins bind voltage-independently at site-4 of sodium channels (Nav) and shift the voltage of activation toward more negative potentials thereby affecting sodium channel activation and promoting spontaneous and repetitive firing. The chain is Toxin Cll8 from Centruroides limpidus (Mexican scorpion).